Reading from the N-terminus, the 286-residue chain is Ribosome-inactivating protein beta-momorcharin (286 aa).

Positions 1–23 (MVKCLLLSFLIIAIFIGVPTAKG) are cleaved as a signal peptide. Residue asparagine 74 is glycosylated (N-linked (GlcNAc...) asparagine). Residues tyrosine 93, tyrosine 132, glutamate 181, and arginine 184 contribute to the active site.

The protein belongs to the ribosome-inactivating protein family. Type 1 RIP subfamily. In terms of processing, bound to a branched hexasaccharide.

It catalyses the reaction Endohydrolysis of the N-glycosidic bond at one specific adenosine on the 28S rRNA.. Functionally, irreversibly relaxes supercoiled DNA and catalyzes double-stranded breakage. Also acts as a ribosome inactivating protein. The polypeptide is Ribosome-inactivating protein beta-momorcharin (MAP30) (Momordica charantia (Bitter gourd)).